The primary structure comprises 38 residues: Photosystem II reaction center protein T (38 aa).

The chain crosses the membrane as a helical span at residues 3 to 23 (ALVYTFLLVSTLGIIFFAIFF).

The protein belongs to the PsbT family. As to quaternary structure, PSII is composed of 1 copy each of membrane proteins PsbA, PsbB, PsbC, PsbD, PsbE, PsbF, PsbH, PsbI, PsbJ, PsbK, PsbL, PsbM, PsbT, PsbY, PsbZ, Psb30/Ycf12, at least 3 peripheral proteins of the oxygen-evolving complex and a large number of cofactors. It forms dimeric complexes.

The protein resides in the plastid. It is found in the chloroplast thylakoid membrane. In terms of biological role, found at the monomer-monomer interface of the photosystem II (PS II) dimer, plays a role in assembly and dimerization of PSII. PSII is a light-driven water plastoquinone oxidoreductase, using light energy to abstract electrons from H(2)O, generating a proton gradient subsequently used for ATP formation. The protein is Photosystem II reaction center protein T of Secale cereale (Rye).